A 420-amino-acid chain; its full sequence is Dynein axonemal assembly factor 4 (420 aa).

Residues 3 to 87 form the CS domain; the sequence is VRVSEFSWQQ…KEPVLWDSLS (85 aa). The tract at residues 7–103 is mediates interaction with ESR1 and STUB1; it reads EFSWQQTPAT…EMMQRIREKS (97 aa). The span at 164 to 192 shows a compositional bias: basic and acidic residues; that stretch reads ECQKKADGQKRVQRKEKPLEGKQAEETKA. A disordered region spans residues 164–212; that stretch reads ECQKKADGQKRVQRKEKPLEGKQAEETKALKPRGLPRKAPPTRLPTRGR. 3 TPR repeats span residues 288 to 321, 322 to 355, and 364 to 397; these read PDWL…NCKI, PLLY…LTPP, and MKAH…DPAN.

Interacts with ZMYND10. Interacts with ESR1 and ESR2. Interacts with STUB1. Interacts with DNAAF2. Interacts with CCT3, CCT4, CCT5 and CCT8. Interacts with DNAAF6/PIH1D3.

It is found in the nucleus. Its subcellular location is the cytoplasm. It localises to the dynein axonemal particle. The protein localises to the cell projection. The protein resides in the neuron projection. Involved in neuronal migration during development of the cerebral neocortex. May regulate the stability and proteasomal degradation of the estrogen receptors that play an important role in neuronal differentiation, survival and plasticity. Axonemal dynein assembly factor required for ciliary motility. This Mus musculus (Mouse) protein is Dynein axonemal assembly factor 4.